The primary structure comprises 333 residues: Phosphate acyltransferase (333 aa).

It belongs to the PlsX family. As to quaternary structure, homodimer. Probably interacts with PlsY.

Its subcellular location is the cytoplasm. It catalyses the reaction a fatty acyl-[ACP] + phosphate = an acyl phosphate + holo-[ACP]. It functions in the pathway lipid metabolism; phospholipid metabolism. Its function is as follows. Catalyzes the reversible formation of acyl-phosphate (acyl-PO(4)) from acyl-[acyl-carrier-protein] (acyl-ACP). This enzyme utilizes acyl-ACP as fatty acyl donor, but not acyl-CoA. In Aliarcobacter butzleri (strain RM4018) (Arcobacter butzleri), this protein is Phosphate acyltransferase.